The primary structure comprises 147 residues: Small ribosomal subunit protein uS12 (147 aa).

The protein belongs to the universal ribosomal protein uS12 family. As to quaternary structure, part of the 30S ribosomal subunit.

With S4 and S5 plays an important role in translational accuracy. Located at the interface of the 30S and 50S subunits. The sequence is that of Small ribosomal subunit protein uS12 from Thermococcus celer.